The primary structure comprises 406 residues: Olfactomedin-like protein 3 (406 aa).

The first 21 residues, 1–21, serve as a signal peptide directing secretion; sequence MGPHTQLLILLLLSWLGPLQG. The stretch at 22–101 forms a coiled coil; it reads QQHHLVEYME…REVDYLETQN (80 aa). Residues 134–401 form the Olfactomedin-like domain; that stretch reads DCGYTISQVR…QIVYKLEMRK (268 aa). A disulfide bond links Cys135 and Cys328. Asn248 carries an N-linked (GlcNAc...) asparagine glycan.

Belongs to the OLFML3 family.

The protein resides in the secreted. In terms of biological role, secreted scaffold protein that plays an essential role in dorsoventral patterning during early development. Stabilizes axial formation by restricting chordin (CHRD) activity on the dorsal side. Acts by facilitating the association between the tolloid proteases and their substrate chordin (CHRD), leading to enhance chordin (CHRD) degradation. May have matrix-related function involved in placental and embryonic development, or play a similar role in other physiological processes. This chain is Olfactomedin-like protein 3 (OLFML3), found in Bos taurus (Bovine).